Here is an 81-residue protein sequence, read N- to C-terminus: MYSRVLSVAAIVTMALAVQAANSTAPYGNTTNSTGTTNGTNGTNTTTSSTATQSSAASITNFSSGAFVIAMIAVACSVMSL.

Residues 1 to 20 (MYSRVLSVAAIVTMALAVQA) constitute a mitochondrion transit peptide. Residues 27–53 (YGNTTNSTGTTNGTNGTNTTTSSTATQ) form a disordered region. The segment covering 28 to 53 (GNTTNSTGTTNGTNGTNTTTSSTATQ) has biased composition (low complexity). A helical transmembrane segment spans residues 59–79 (ITNFSSGAFVIAMIAVACSVM).

The protein resides in the mitochondrion membrane. This is an uncharacterized protein from Schizosaccharomyces pombe (strain 972 / ATCC 24843) (Fission yeast).